The sequence spans 193 residues: MRLCDRDIEAWLDCEKLVISPRPPIERINGATVDVRLGNQFRVFRGHTAAFIDLSGPKDEVSAALDRVMSDEIVLPEGEAFFLHPGELALAVTLESVTLPNDLVGWLDGRSSLARLGLMVHVTAHRIDPGWQGRIVLEFYNSGKLPLALRPGMLIGALSFEPLSGPAARPYNSRQDAKYRDQQGAVASRIDKD.

DCTP-binding positions include 110–115 (RSSLAR), D128, 136–138 (VLE), Y171, K178, and Q182. Residue E138 is the Proton donor/acceptor of the active site. The tract at residues 169 to 193 (RPYNSRQDAKYRDQQGAVASRIDKD) is disordered.

This sequence belongs to the dCTP deaminase family. Homotrimer.

It carries out the reaction dCTP + H2O + H(+) = dUTP + NH4(+). Its pathway is pyrimidine metabolism; dUMP biosynthesis; dUMP from dCTP (dUTP route): step 1/2. Functionally, catalyzes the deamination of dCTP to dUTP. The chain is dCTP deaminase from Serratia proteamaculans (strain 568).